A 209-amino-acid polypeptide reads, in one-letter code: tRNA (guanine-N(7)-)-methyltransferase (209 aa).

S-adenosyl-L-methionine contacts are provided by Glu-40, Glu-65, and Asp-114. The active site involves Asp-114. Residues Asp-150 and 188–191 contribute to the substrate site; that span reads TAFE.

Belongs to the class I-like SAM-binding methyltransferase superfamily. TrmB family.

The catalysed reaction is guanosine(46) in tRNA + S-adenosyl-L-methionine = N(7)-methylguanosine(46) in tRNA + S-adenosyl-L-homocysteine. The protein operates within tRNA modification; N(7)-methylguanine-tRNA biosynthesis. Its function is as follows. Catalyzes the formation of N(7)-methylguanine at position 46 (m7G46) in tRNA. The polypeptide is tRNA (guanine-N(7)-)-methyltransferase (Bdellovibrio bacteriovorus (strain ATCC 15356 / DSM 50701 / NCIMB 9529 / HD100)).